The following is a 246-amino-acid chain: Carboxy-S-adenosyl-L-methionine synthase (246 aa).

S-adenosyl-L-methionine contacts are provided by residues Y39, 64–66, 89–90, 121–122, N136, and R203; these read GCS, DN, and DI.

It belongs to the class I-like SAM-binding methyltransferase superfamily. Cx-SAM synthase family. Homodimer.

It catalyses the reaction prephenate + S-adenosyl-L-methionine = carboxy-S-adenosyl-L-methionine + 3-phenylpyruvate + H2O. In terms of biological role, catalyzes the conversion of S-adenosyl-L-methionine (SAM) to carboxy-S-adenosyl-L-methionine (Cx-SAM). The sequence is that of Carboxy-S-adenosyl-L-methionine synthase from Pseudomonas aeruginosa (strain UCBPP-PA14).